We begin with the raw amino-acid sequence, 367 residues long: Chorismate synthase (367 aa).

Arginine 48 provides a ligand contact to NADP(+). FMN contacts are provided by residues 125–127, 243–244, glycine 283, 298–302, and arginine 324; these read RSS, NA, and KPTSS.

The protein belongs to the chorismate synthase family. Homotetramer. The cofactor is FMNH2.

The catalysed reaction is 5-O-(1-carboxyvinyl)-3-phosphoshikimate = chorismate + phosphate. The protein operates within metabolic intermediate biosynthesis; chorismate biosynthesis; chorismate from D-erythrose 4-phosphate and phosphoenolpyruvate: step 7/7. Its function is as follows. Catalyzes the anti-1,4-elimination of the C-3 phosphate and the C-6 proR hydrogen from 5-enolpyruvylshikimate-3-phosphate (EPSP) to yield chorismate, which is the branch point compound that serves as the starting substrate for the three terminal pathways of aromatic amino acid biosynthesis. This reaction introduces a second double bond into the aromatic ring system. The sequence is that of Chorismate synthase from Psychrobacter arcticus (strain DSM 17307 / VKM B-2377 / 273-4).